The chain runs to 3640 residues: Serine/threonine-protein kinase SMG1 (3640 aa).

The segment covering 21-34 (NDWQPRSDSLSASQ) has biased composition (polar residues). The segment at 21–41 (NDWQPRSDSLSASQDGVKCSV) is disordered. An FAT domain is found at 1495-1843 (YCHSGKCELA…LYPAIVGSIS (349 aa)). Residues 1794–1829 (APWRGIIPQLFSRLNHPEAYIRQSICSLLCRVAQDS) form an HEAT repeat. Residues 1870–1890 (GLCGGESETGSGPTSQESSRG) are disordered. Residues 1874–1887 (GESETGSGPTSQES) show a composition bias toward low complexity. A PI3K/PI4K catalytic domain is found at 2102–2441 (VGNTITILPT…MERDITRSLF (340 aa)). The tract at residues 2108–2114 (ILPTKTK) is G-loop. The catalytic loop stretch occupies residues 2310-2318 (GLGDRHLDN). The interval 2330 to 2354 (HIDYNVCFEKGKSLRVPEKVPFRMT) is activation loop. The region spanning 3608–3640 (RRMSVTEQVDYVIKEATNVDNLAQLYEGWTAWV) is the FATC domain.

The protein belongs to the PI3/PI4-kinase family. Mn(2+) serves as cofactor. In terms of processing, autophosphorylated.

It localises to the nucleus. The protein localises to the cytoplasm. The enzyme catalyses L-seryl-[protein] + ATP = O-phospho-L-seryl-[protein] + ADP + H(+). It catalyses the reaction L-threonyl-[protein] + ATP = O-phospho-L-threonyl-[protein] + ADP + H(+). In terms of biological role, serine/threonine protein kinase involved in both mRNA surveillance and genotoxic stress response pathways. Recognizes the substrate consensus sequence [ST]-Q. Plays a central role in nonsense-mediated decay (NMD) of mRNAs containing premature stop codons by phosphorylating UPF1/RENT1. This chain is Serine/threonine-protein kinase SMG1, found in Danio rerio (Zebrafish).